The following is a 337-amino-acid chain: Phosphate acyltransferase (337 aa).

It belongs to the PlsX family. Homodimer. Probably interacts with PlsY.

The protein localises to the cytoplasm. It catalyses the reaction a fatty acyl-[ACP] + phosphate = an acyl phosphate + holo-[ACP]. It functions in the pathway lipid metabolism; phospholipid metabolism. Functionally, catalyzes the reversible formation of acyl-phosphate (acyl-PO(4)) from acyl-[acyl-carrier-protein] (acyl-ACP). This enzyme utilizes acyl-ACP as fatty acyl donor, but not acyl-CoA. This is Phosphate acyltransferase from Hydrogenovibrio crunogenus (strain DSM 25203 / XCL-2) (Thiomicrospira crunogena).